The chain runs to 1289 residues: Ethylene-insensitive protein 2.1 (1289 aa).

A run of 5 helical transmembrane segments spans residues 18 to 38 (LLPAVGPGLLIAIGYVDPGKW), 48 to 68 (FGFDLVLPMLLFNFVAILCQY), 96 to 116 (FLGVQAALSVIALDLTMILGI), 128 to 148 (LSTCVSLAAAEAILFPFFATL), and 155 to 175 (SFLCTCIAGFILLLYFFGVLI). A glycan (N-linked (GlcNAc...) asparagine) is linked at Asn-185. A helical transmembrane segment spans residues 199-219 (LMSLLGASIMPHNFFLHSAIV). N-linked (GlcNAc...) asparagine glycosylation is present at Asn-227. 7 helical membrane-spanning segments follow: residues 235-255 (LNHFFAILCIFSGIYLVNFVL), 260-280 (ANVFHSTGLVLLTFPDAMSLM), 288-308 (VAPFGFSLILFFANQITAFSW), 335-355 (IIAVVPALYCVWTSGVEGIYQ), 356-376 (LLILTQVMVALLLPSSVIPLF), 393-413 (FLEFVALISFMGMLGIKIIFV), and 439-459 (YIVLLITACSSFCLMLWLAAT). An N-linked (GlcNAc...) asparagine glycan is attached at Asn-521. Residues 611 to 659 (LHTEKEDDEGDNWEPEDSSKGVPGSTLSLTSDGPGSFRSLSGKSDAGGN) are disordered. Residues 616–626 (EDDEGDNWEPE) show a composition bias toward acidic residues. Residues 635–652 (STLSLTSDGPGSFRSLSG) are compositionally biased toward polar residues. Phosphoserine occurs at positions 646 and 663. Asn-745 carries N-linked (GlcNAc...) asparagine glycosylation. Positions 792–816 (SIADSSERRYSGVRTPPSSDGWDNQ) are disordered. Residues 807–816 (PPSSDGWDNQ) are compositionally biased toward polar residues. Thr-819 carries the post-translational modification Phosphothreonine. Ser-923 is modified (phosphoserine). A glycan (N-linked (GlcNAc...) asparagine) is linked at Asn-1025. The tract at residues 1208–1227 (HRSSPPASNGMLPPASKPGR) is disordered. Positions 1274 to 1281 (LKRYKRRL) match the Nuclear localization signal motif.

It belongs to the NRAMP (TC 2.A.55) family.

The protein localises to the endoplasmic reticulum membrane. Its subcellular location is the nucleus. It localises to the cytoplasm. Functionally, central factor in signaling pathways regulated by ethylene (ET) and involved in various processes including development, plant defense, senescence, nucleotide sugar flux, and tropisms. In terms of biological role, trafficking signal inducing ethylene response. The nuclear localization is both necessary and sufficient to activate EIN3-mediated transcription and ethylene responses. The protein is Ethylene-insensitive protein 2.1 of Populus trichocarpa (Western balsam poplar).